Consider the following 436-residue polypeptide: UPF0597 protein YhaM (436 aa).

It belongs to the UPF0597 family.

The polypeptide is UPF0597 protein YhaM (Shigella boydii serotype 4 (strain Sb227)).